We begin with the raw amino-acid sequence, 63 residues long: Sperm protamine P1 (63 aa).

The interval 1 to 63 (MARYRRHSRS…RYSRRGRRRY (63 aa)) is disordered.

It belongs to the protamine P1 family. Testis.

It localises to the nucleus. Its subcellular location is the chromosome. Functionally, protamines substitute for histones in the chromatin of sperm during the haploid phase of spermatogenesis. They compact sperm DNA into a highly condensed, stable and inactive complex. This chain is Sperm protamine P1 (PRM1), found in Phascogale tapoatafa (Common wambenger).